We begin with the raw amino-acid sequence, 751 residues long: Photosystem I P700 chlorophyll a apoprotein A1 (751 aa).

8 consecutive transmembrane segments (helical) span residues 73 to 96 (VFSA…FHGA), 159 to 182 (LYTT…FHYH), 198 to 222 (LNHH…HVSL), 294 to 312 (TAHH…GHMY), 349 to 372 (WHAQ…HHMY), 388 to 414 (LSLF…IFMV), 436 to 458 (AIIS…LYIH), and 533 to 551 (FMVH…LILL). Residues cysteine 575 and cysteine 584 each contribute to the [4Fe-4S] cluster site. The next 2 membrane-spanning stretches (helical) occupy residues 591-612 (HVFL…HFSW) and 665-687 (LSAY…LDIF). Residue histidine 676 coordinates chlorophyll a'. Chlorophyll a-binding residues include methionine 683 and tyrosine 692. Tryptophan 693 is a phylloquinone binding site. A helical transmembrane segment spans residues 725–745 (AVGVAHYLLGGIATTWSFFLA).

The protein belongs to the PsaA/PsaB family. As to quaternary structure, the PsaA/B heterodimer binds the P700 chlorophyll special pair and subsequent electron acceptors. PSI consists of a core antenna complex that captures photons, and an electron transfer chain that converts photonic excitation into a charge separation. The eukaryotic PSI reaction center is composed of at least 11 subunits. It depends on P700 is a chlorophyll a/chlorophyll a' dimer, A0 is one or more chlorophyll a, A1 is one or both phylloquinones and FX is a shared 4Fe-4S iron-sulfur center. as a cofactor.

The protein resides in the plastid. Its subcellular location is the chloroplast thylakoid membrane. The enzyme catalyses reduced [plastocyanin] + hnu + oxidized [2Fe-2S]-[ferredoxin] = oxidized [plastocyanin] + reduced [2Fe-2S]-[ferredoxin]. Functionally, psaA and PsaB bind P700, the primary electron donor of photosystem I (PSI), as well as the electron acceptors A0, A1 and FX. PSI is a plastocyanin/cytochrome c6-ferredoxin oxidoreductase, converting photonic excitation into a charge separation, which transfers an electron from the donor P700 chlorophyll pair to the spectroscopically characterized acceptors A0, A1, FX, FA and FB in turn. Oxidized P700 is reduced on the lumenal side of the thylakoid membrane by plastocyanin or cytochrome c6. This chain is Photosystem I P700 chlorophyll a apoprotein A1, found in Stigeoclonium helveticum (Green alga).